Here is a 571-residue protein sequence, read N- to C-terminus: Apolipoprotein N-acyltransferase (571 aa).

Transmembrane regions (helical) follow at residues 13–33 (VVLW…IALV), 51–68 (LYAA…GLRY), 72–92 (LMFL…VLFI), 118–138 (LVAA…FTGI), 152–172 (MLIQ…IVCV), and 199–219 (LVTA…SMNA). The CN hydrolase domain occupies 234–527 (NELTVYEQDI…SDVIYAQPRR (294 aa)). Glu-275 functions as the Proton acceptor in the catalytic mechanism. Residue Lys-380 is part of the active site. The active-site Nucleophile is the Cys-430. The helical transmembrane segment at 542–562 (AGLMGAATLCGLAWMTFEWLM) threads the bilayer.

This sequence belongs to the CN hydrolase family. Apolipoprotein N-acyltransferase subfamily.

Its subcellular location is the cell inner membrane. The enzyme catalyses N-terminal S-1,2-diacyl-sn-glyceryl-L-cysteinyl-[lipoprotein] + a glycerophospholipid = N-acyl-S-1,2-diacyl-sn-glyceryl-L-cysteinyl-[lipoprotein] + a 2-acyl-sn-glycero-3-phospholipid + H(+). The protein operates within protein modification; lipoprotein biosynthesis (N-acyl transfer). Functionally, catalyzes the phospholipid dependent N-acylation of the N-terminal cysteine of apolipoprotein, the last step in lipoprotein maturation. The chain is Apolipoprotein N-acyltransferase from Rhodopirellula baltica (strain DSM 10527 / NCIMB 13988 / SH1).